The sequence spans 211 residues: Suppressor of cytokine signaling 1 (211 aa).

Residues 1–53 form a disordered region; sequence MVAHNQVAADNAVSTAAEPRRRPEPSSSSSSSPAAPARPRPCPAVPAPAPGDT. Residues 25–35 show a composition bias toward low complexity; it reads PSSSSSSSPAA. Positions 36 to 49 are enriched in pro residues; that stretch reads PARPRPCPAVPAPA. Residues 55 to 66 are kinase inhibitory region (KIR); it reads FRTFRSHADYRR. The interval 67–78 is extended SH2 subdomain (ESS); the sequence is ITRASALLDACG. The region spanning 79 to 174 is the SH2 domain; sequence FYWGPLSVHG…PLRQRRVRPL (96 aa). The 50-residue stretch at 161–210 folds into the SOCS box domain; sequence MLGAPLRQRRVRPLQELCRQRIVATVGRENLARIPLNPVLRDYLSSFPFQ. Residues 173 to 182 form an interaction with Elongin BC complex region; it reads PLQELCRQRI.

The protein belongs to the SOCS1 family. Interacts with multiple activated signaling proteins of the tyrosine kinase signaling pathway including JAK family kinases, TEC, KIT, GRB2 and VAV. Binding to JAKs is mediated through the KIR and SH2 domains to a phosphorylated tyrosine residue within the JAK JH1 domain. Binds the SH3 domain of GRB2 via diproline determinants in the N-terminus, and the N-terminal regulatory domain of VAV. Interacts with the Elongin BC complex (ELOB and ELOC). Component of an ECS CBC(SOCS1) E3 ubiquitin-protein ligase complex which contains Elongin BC, CUL5, RBX1 and SOCS1. Interacts (via SH2 domain and SOCS box) with TRIM8. Interacts with AXL, CUL2 and FGFR3. Interacts with INSR. Interacts with TRIM8. Interacts with DCUN1D1. Interacts with IFNGR1. Expressed in all tissues with high expression in spleen, small intestine and peripheral blood leukocytes.

It localises to the nucleus. The protein resides in the cytoplasmic vesicle. It functions in the pathway protein modification; protein ubiquitination. Its function is as follows. Essential negative regulator of type I and type II interferon (IFN) signaling, as well as that of other cytokines, including IL2, IL4, IL6 and leukemia inhibitory factor (LIF). Downregulates cytokine signaling by inhibiting the JAK/STAT signaling pathway. Acts by binding to JAK proteins and to IFNGR1 and inhibiting their kinase activity. In vitro, suppresses Tec protein-tyrosine activity. Regulates IFN-gamma (IFNG)-mediated sensory neuron survival. Probable substrate recognition component of an ECS (Elongin BC-CUL2/5-SOCS-box protein) E3 ubiquitin ligase complex which mediates the ubiquitination and subsequent proteasomal degradation of target proteins. In Homo sapiens (Human), this protein is Suppressor of cytokine signaling 1 (SOCS1).